The sequence spans 638 residues: Methylmalonyl-CoA mutase small subunit (638 aa).

Polar residues predominate over residues 1-11 (MSSTDQGTNPA). The segment at 1 to 34 (MSSTDQGTNPADTDDLTPTTLSLAGDFPKATEEQ) is disordered.

Belongs to the methylmalonyl-CoA mutase family. In terms of assembly, heterodimer of an alpha and a beta chain. The cofactor is adenosylcob(III)alamin.

It carries out the reaction (R)-methylmalonyl-CoA = succinyl-CoA. It participates in metabolic intermediate metabolism; propanoyl-CoA degradation; succinyl-CoA from propanoyl-CoA: step 3/3. In terms of biological role, catalyzes the isomerization of succinyl-CoA to methylmalonyl-CoA during synthesis of propionate from tricarboxylic acid-cycle intermediates. The chain is Methylmalonyl-CoA mutase small subunit (mutA) from Propionibacterium freudenreichii subsp. shermanii.